Here is a 131-residue protein sequence, read N- to C-terminus: Small ribosomal subunit protein uS11 (131 aa).

Belongs to the universal ribosomal protein uS11 family. As to quaternary structure, part of the 30S ribosomal subunit. Interacts with proteins S7 and S18. Binds to IF-3. Interacts with VmlR. Interacts with BrxC.

Located on the platform of the 30S subunit, it bridges several disparate RNA helices of the 16S rRNA. Forms part of the Shine-Dalgarno cleft in the 70S ribosome. The sequence is that of Small ribosomal subunit protein uS11 from Bacillus subtilis (strain 168).